The primary structure comprises 283 residues: MRDSQNTAQTLTESLKYFLKYRDQTVVIKYGGNAMIDEKVKESILKDILLLKTVGIKVVLVHGGGPAIGELLEKYEQKSQFVQGLRVTDKKTAQLALTALAGKVNKSLVQDIIRLGGNAIGVSGIDGKLIEAKPISEDLGYVGEITAIHPEIIERINQTDAVPVIASAGIGLDGEIYNVNADTAASRIAGALSAEQFILLSDVRGLYGNFPDEESFIDEINLTNLEKLVKEKKITDGMIPKIEAIKYAMFEGLGQAVLLDGRVPHALLLELFTDKGQGTMINH.

Residues 64–65 (GG), Arg-86, and Asn-178 each bind substrate.

The protein belongs to the acetylglutamate kinase family. ArgB subfamily.

The protein localises to the cytoplasm. The catalysed reaction is N-acetyl-L-glutamate + ATP = N-acetyl-L-glutamyl 5-phosphate + ADP. Its pathway is amino-acid biosynthesis; L-arginine biosynthesis; N(2)-acetyl-L-ornithine from L-glutamate: step 2/4. Its function is as follows. Catalyzes the ATP-dependent phosphorylation of N-acetyl-L-glutamate. This is Acetylglutamate kinase from Lactococcus lactis subsp. cremoris (strain MG1363).